A 206-amino-acid polypeptide reads, in one-letter code: MARYLGPKLKLSRREGTDLFLKSGVRAIDSKCKLETAPGQHGARKPRLSEYGTQLREKQKVRRIYGVLEKQFRNYYKDAARTKGNTGENLLQLLETRLDNVVYRMGFGATRAESRQLVSHKSIMVNGRVVNIPSFKVSANDVVSIREKSRTQARIKAALEVAAQREKPTWVEVDNAKMEGAFKRVPERSDLSAEINEQLIVELYSK.

Residues 96 to 156 (TRLDNVVYRM…EKSRTQARIK (61 aa)) enclose the S4 RNA-binding domain.

This sequence belongs to the universal ribosomal protein uS4 family. As to quaternary structure, part of the 30S ribosomal subunit. Contacts protein S5. The interaction surface between S4 and S5 is involved in control of translational fidelity.

In terms of biological role, one of the primary rRNA binding proteins, it binds directly to 16S rRNA where it nucleates assembly of the body of the 30S subunit. Its function is as follows. With S5 and S12 plays an important role in translational accuracy. This Shewanella baltica (strain OS223) protein is Small ribosomal subunit protein uS4.